Consider the following 483-residue polypeptide: Glutamyl-tRNA(Gln) amidotransferase subunit A (483 aa).

Residues K76 and S151 each act as charge relay system in the active site. S175 serves as the catalytic Acyl-ester intermediate.

This sequence belongs to the amidase family. GatA subfamily. As to quaternary structure, heterotrimer of A, B and C subunits.

It catalyses the reaction L-glutamyl-tRNA(Gln) + L-glutamine + ATP + H2O = L-glutaminyl-tRNA(Gln) + L-glutamate + ADP + phosphate + H(+). In terms of biological role, allows the formation of correctly charged Gln-tRNA(Gln) through the transamidation of misacylated Glu-tRNA(Gln) in organisms which lack glutaminyl-tRNA synthetase. The reaction takes place in the presence of glutamine and ATP through an activated gamma-phospho-Glu-tRNA(Gln). This chain is Glutamyl-tRNA(Gln) amidotransferase subunit A, found in Pseudomonas fluorescens (strain ATCC BAA-477 / NRRL B-23932 / Pf-5).